The chain runs to 591 residues: Lipoprotein LpqB (591 aa).

Positions 1-20 (MTLRPSRRAVLSAAAVLLTG) are cleaved as a signal peptide. A lipid anchor (N-palmitoyl cysteine) is attached at Cys21. A lipid anchor (S-diacylglycerol cysteine) is attached at Cys21.

It belongs to the LpqB lipoprotein family.

The protein localises to the cell membrane. The polypeptide is Lipoprotein LpqB (Cutibacterium acnes (strain DSM 16379 / KPA171202) (Propionibacterium acnes)).